Reading from the N-terminus, the 412-residue chain is Sterol-4-alpha-carboxylate 3-dehydrogenase erg26, decarboxylating (412 aa).

NADP(+)-binding positions include G17 to G23, D89 to I90, and T111 to T113. Positions 158 and 188 each coordinate substrate. Residues Y188, K192, and P217–I220 contribute to the NADP(+) site. K192 serves as the catalytic Proton donor.

Belongs to the 3-beta-HSD family. As to quaternary structure, heterotetramer of erg25, erg26, erg27 and erg28. Erg28 acts as a scaffold to tether erg27 and other 4,4-demethylation-related enzymes, forming a demethylation enzyme complex, in the endoplasmic reticulum.

The protein resides in the endoplasmic reticulum membrane. It functions in the pathway steroid metabolism; ergosterol biosynthesis. Its function is as follows. Sterol-C4-methyl oxidase; part of the third module of ergosterol biosynthesis pathway that includes the late steps of the pathway. Erg26 is a catalytic component of the C-4 demethylation complex that catalyzes the conversion of 4,4-dimethylfecosterol into fecosterol via 4-methylfecosterol. The third module or late pathway involves the ergosterol synthesis itself through consecutive reactions that mainly occur in the endoplasmic reticulum (ER) membrane. Firstly, the squalene synthase erg9 catalyzes the condensation of 2 farnesyl pyrophosphate moieties to form squalene, which is the precursor of all steroids. Squalene synthase is crucial for balancing the incorporation of farnesyl diphosphate (FPP) into sterol and nonsterol isoprene synthesis. Secondly, squalene is converted into lanosterol by the consecutive action of the squalene epoxidase erg1 and the lanosterol synthase erg7. Then, the delta(24)-sterol C-methyltransferase erg6 methylates lanosterol at C-24 to produce eburicol. Eburicol is the substrate of the sterol 14-alpha demethylase encoded by cyp51A and cyp51B, to yield 4,4,24-trimethyl ergosta-8,14,24(28)-trienol. The C-14 reductase erg24 then reduces the C14=C15 double bond which leads to 4,4-dimethylfecosterol. A sequence of further demethylations at C-4, involving the C-4 demethylation complex containing the C-4 methylsterol oxidases erg25A or erg25B, the sterol-4-alpha-carboxylate 3-dehydrogenase erg26 and the 3-keto-steroid reductase erg27, leads to the production of fecosterol via 4-methylfecosterol. The C-8 sterol isomerase erg2 then catalyzes the reaction which results in unsaturation at C-7 in the B ring of sterols and thus converts fecosterol to episterol. The sterol-C5-desaturase erg3B then catalyzes the introduction of a C-5 double bond in the B ring to produce 5-dehydroepisterol. The 2 other sterol-C5-desaturases, erg3A and erg3C, seem to be less important in ergosterol biosynthesis. The C-22 sterol desaturase erg5 further converts 5-dehydroepisterol into ergosta-5,7,22,24(28)-tetraen-3beta-ol by forming the C-22(23) double bond in the sterol side chain. Finally, ergosta-5,7,22,24(28)-tetraen-3beta-ol is substrate of the C-24(28) sterol reductases erg4A and erg4B to produce ergosterol. Possible alternative sterol biosynthetic pathways might exist from fecosterol to ergosterol, depending on the activities of the erg3 isoforms. The chain is Sterol-4-alpha-carboxylate 3-dehydrogenase erg26, decarboxylating from Aspergillus fumigatus (strain ATCC MYA-4609 / CBS 101355 / FGSC A1100 / Af293) (Neosartorya fumigata).